The primary structure comprises 266 residues: Protein PAE0875 (266 aa).

Belongs to the CinA family.

In Pyrobaculum aerophilum (strain ATCC 51768 / DSM 7523 / JCM 9630 / CIP 104966 / NBRC 100827 / IM2), this protein is Protein PAE0875.